Reading from the N-terminus, the 612-residue chain is PAN2-PAN3 deadenylation complex subunit PAN3 (612 aa).

The segment at 10 to 39 (WAKDTPCKNITIYGYCKYENDGCIFNHGKP) adopts a C3H1-type zinc-finger fold. Positions 44–62 (SNTGGAAAGSAEDSAASGG) are enriched in low complexity. Residues 44–64 (SNTGGAAAGSAEDSAASGGVT) form a disordered region. 2 short sequence motifs (PABPC-interacting motif-2 (PAM-2)) span residues 84 to 104 (SVAI…IVSS) and 111 to 131 (TAFT…SANV). Residues 231 to 481 (QVFPSDGNLP…TIAEFTALFS (251 aa)) form a pseudokinase domain region. ATP contacts are provided by residues Arg286, 336–343 (DYYPQSNS), and 389–390 (DK). Residues 482–520 (HKMLDIISSSQTYSEYIEQHLSRELENGRLFRLMCKLNF) are a coiled coil. Residues 521 to 612 (IFGRMESSMD…IDSTFRSMTQ (92 aa)) form a knob domain region.

It belongs to the protein kinase superfamily. PAN3 family. In terms of assembly, homodimer. Forms a heterotrimer with a catalytic subunit PAN2 to form the poly(A)-nuclease (PAN) deadenylation complex. Interacts (via PAM-2 motif) with poly(A)-binding protein PAB1 (via PABC domain), conferring substrate specificity of the enzyme complex.

The protein resides in the cytoplasm. Functionally, regulatory subunit of the poly(A)-nuclease (PAN) deadenylation complex, one of two cytoplasmic mRNA deadenylases involved in mRNA turnover. PAN specifically shortens poly(A) tails of RNA and the activity is stimulated by poly(A)-binding protein PAB1. PAN deadenylation is followed by rapid degradation of the shortened mRNA tails by the CCR4-NOT complex. Deadenylated mRNAs are then degraded by two alternative mechanisms, namely exosome-mediated 3'-5' exonucleolytic degradation, or deadenylation-dependent mRNA decaping and subsequent 5'-3' exonucleolytic degradation by XRN1. May also be involved in post-transcriptional maturation of mRNA poly(A) tails. PAN3 acts as a positive regulator for PAN activity, recruiting the catalytic subunit PAN2 to mRNA via its interaction with RNA and with PAB1. The polypeptide is PAN2-PAN3 deadenylation complex subunit PAN3 (Eremothecium gossypii (strain ATCC 10895 / CBS 109.51 / FGSC 9923 / NRRL Y-1056) (Yeast)).